The primary structure comprises 213 residues: MSIGILGTKLGMTQIFDESGKAVPVTVIQAGPCPITQIKTVATDGYNAIQIGFLEVREKQLSKPELGHLSKAGAPPLRHLLEYRVPSTDGLELGQALTADRFEAGQKVDVQGHTIGRGFTGYQKRHGFARGPMSHGSKNHRLPGSTGAGTTPGRVYPGKRMAGRSGNDKTTIRGLTVVRVDADRNLLLVKGSVPGKPGALLNITPATVVGQQA.

Residues 131 to 168 form a disordered region; sequence GPMSHGSKNHRLPGSTGAGTTPGRVYPGKRMAGRSGND.

This sequence belongs to the universal ribosomal protein uL3 family. As to quaternary structure, part of the 50S ribosomal subunit. Forms a cluster with proteins L14 and L19.

In terms of biological role, one of the primary rRNA binding proteins, it binds directly near the 3'-end of the 23S rRNA, where it nucleates assembly of the 50S subunit. This is Large ribosomal subunit protein uL3 from Synechococcus elongatus (strain ATCC 33912 / PCC 7942 / FACHB-805) (Anacystis nidulans R2).